Here is a 1417-residue protein sequence, read N- to C-terminus: DExH-box ATP-dependent RNA helicase DExH4, chloroplastic (1417 aa).

Residues 1-12 (MAPTKKPQKNKQ) are compositionally biased toward basic residues. The interval 1-37 (MAPTKKPQKNKQSKNEIASSLIPNSGHKKPSKAPKLL) is disordered. A chloroplast-targeting transit peptide spans 1–61 (MAPTKKPQKN…NFRRTPSPVT (61 aa)). A Helicase ATP-binding domain is found at 607-781 (LQKLKEKDVL…FGQCPIITAQ (175 aa)). 620 to 627 (GETGSGKT) provides a ligand contact to ATP. Residues 722 to 725 (DEVH) carry the DEIH box motif. The region spanning 868–1043 (LLEELICHID…ELCLHIKLLG (176 aa)) is the Helicase C-terminal domain.

Belongs to the DExH box helicase family.

The protein localises to the plastid. It is found in the chloroplast. It catalyses the reaction ATP + H2O = ADP + phosphate + H(+). This is DExH-box ATP-dependent RNA helicase DExH4, chloroplastic from Arabidopsis thaliana (Mouse-ear cress).